The following is a 1317-amino-acid chain: Clustered mitochondria protein homolog (1317 aa).

A Clu domain is found at 382-626 (DITRSQESYL…RVTPLDVTWQ (245 aa)). The span at 669–689 (KAQEEAANKEQSSEVTESKEQ) shows a compositional bias: basic and acidic residues. 2 disordered regions span residues 669–700 (KAQE…EALD) and 939–966 (ANGV…PSRA). TPR repeat units lie at residues 1040–1073 (AKLY…TERT), 1082–1115 (ILAY…WKII), and 1124–1157 (ITTM…CESL). 2 disordered regions span residues 1252–1273 (VQPQ…ANAS) and 1288–1317 (GGDA…KSSA).

The protein belongs to the CLU family. In terms of assembly, may associate with the eukaryotic translation initiation factor 3 (eIF-3) complex.

The protein localises to the cytoplasm. Its function is as follows. mRNA-binding protein involved in proper cytoplasmic distribution of mitochondria. This is Clustered mitochondria protein homolog from Neosartorya fischeri (strain ATCC 1020 / DSM 3700 / CBS 544.65 / FGSC A1164 / JCM 1740 / NRRL 181 / WB 181) (Aspergillus fischerianus).